Reading from the N-terminus, the 139-residue chain is D-ribose pyranase (139 aa).

The Proton donor role is filled by histidine 20. Residues aspartate 28, histidine 106, and tyrosine 128–asparagine 130 each bind substrate.

It belongs to the RbsD / FucU family. RbsD subfamily. In terms of assembly, homodecamer.

Its subcellular location is the cytoplasm. It catalyses the reaction beta-D-ribopyranose = beta-D-ribofuranose. It functions in the pathway carbohydrate metabolism; D-ribose degradation; D-ribose 5-phosphate from beta-D-ribopyranose: step 1/2. Functionally, catalyzes the interconversion of beta-pyran and beta-furan forms of D-ribose. This is D-ribose pyranase from Pasteurella multocida (strain Pm70).